The sequence spans 485 residues: Probable trichothecene esterase SAT6 (485 aa).

Residues 1–23 (MPQDPNTTLQMSSSKPSLSDLSV) are disordered. Over residues 9–23 (LQMSSSKPSLSDLSV) the composition is skewed to low complexity. Active-site charge relay system residues include serine 262, aspartate 406, and histidine 438.

The protein belongs to the AB hydrolase superfamily. Lipase family.

It participates in mycotoxin biosynthesis. Functionally, probable trichothecene esterase; part of the satratoxin SC1 cluster involved in the biosynthesis of satratoxins, trichothecene mycotoxins that are associated with human food poisonings. Satratoxins are suggested to be made by products of multiple gene clusters (SC1, SC2 and SC3) that encode 21 proteins in all, including polyketide synthases, acetyltransferases, and other enzymes expected to modify the trichothecene skeleton. SC1 encodes 10 proteins, SAT1 to SAT10. The largest are SAT8, which encodes a putative polyketide synthase (PKS) with a conventional non-reducing architecture, and SAT10, a putative protein containing four ankyrin repeats and thus may be involved in protein scaffolding. The putative short-chain reductase SAT3 may assist the PKS in some capacity. SAT6 contains a secretory lipase domain and acts probably as a trichothecene esterase. SAT5 encodes a putative acetyltransferase, and so, with SAT6, may affect endogenous protection from toxicity. The probable transcription factor SAT9 may regulate the expression of the SC1 cluster. SC2 encodes proteins SAT11 to SAT16, the largest of which encodes the putative reducing PKS SAT13. SAT11 is a cytochrome P450 monooxygenase, while SAT14 and SAT16 are probable acetyltransferases. The SC2 cluster may be regulated by the transcription factor SAT15. SC3 is a small cluster that encodes 5 proteins, SAT17 to SAT21. SAT21 is a putative MFS-type transporter which may have a role in exporting secondary metabolites. The four other proteins putatively encoded in SC3 include the taurine hydroxylase-like protein SAT17, the O-methyltransferase SAT18, the acetyltransferase SAT19, and the Cys6-type zinc finger SAT20, the latter being probably involved in regulation of SC3 expression. The sequence is that of Probable trichothecene esterase SAT6 from Stachybotrys chartarum (strain CBS 109288 / IBT 7711) (Toxic black mold).